A 196-amino-acid chain; its full sequence is Fucoxanthin-chlorophyll a-c binding protein A, chloroplastic (196 aa).

Residues 1-31 constitute a chloroplast transit peptide; it reads MKFAVFASLLASRAAFAPAQQSARTSVATNM. 3 consecutive transmembrane segments (helical) span residues 73–94, 114–134, and 174–196; these read ICMLAVAGYLTQEAGIRLPGDI, VPGAGIAQIIAFIGFFEIAVM, and GRAAQMGILALMVHEQLGVSILP.

It belongs to the fucoxanthin chlorophyll protein family. As to quaternary structure, the LHC complex of chromophytic algae is composed of fucoxanthin, chlorophyll A and C bound non-covalently by fucoxanthin chlorophyll proteins (FCPs). The ratio of the pigments in LHC; fucoxanthin: chlorophyll C: chlorophyll A; (0.6-1): (0.1-0.3): (1).

It is found in the plastid. The protein resides in the chloroplast thylakoid membrane. Functionally, the light-harvesting complex (LHC) functions as a light receptor, it captures and delivers excitation energy to photosystems with which it is closely associated. Energy is transferred from the carotenoid and chlorophyll C (or B) to chlorophyll A and the photosynthetic reaction centers where it is used to synthesize ATP and reducing power. The protein is Fucoxanthin-chlorophyll a-c binding protein A, chloroplastic (FCPA) of Phaeodactylum tricornutum (Diatom).